The primary structure comprises 421 residues: Cell division protein FtsA (421 aa).

This sequence belongs to the FtsA/MreB family. In terms of assembly, self-interacts. Interacts with FtsZ.

The protein resides in the cell membrane. In terms of biological role, cell division protein that is involved in the assembly of the Z ring. May serve as a membrane anchor for the Z ring. In Buchnera aphidicola subsp. Baizongia pistaciae (strain Bp), this protein is Cell division protein FtsA.